Here is a 430-residue protein sequence, read N- to C-terminus: Adenylosuccinate synthetase (430 aa).

GTP is bound by residues Gly12–Lys18 and Gly40–Thr42. The active-site Proton acceptor is Asp13. Mg(2+) is bound by residues Asp13 and Gly40. Residues Asp13 to Lys16, Asn38 to His41, Thr130, Arg144, Gln224, Thr239, and Arg303 each bind IMP. The Proton donor role is filled by His41. Residue Thr299–Arg305 participates in substrate binding. Residues Arg305, Lys331 to Asp333, and Ser413 to Ser415 each bind GTP.

This sequence belongs to the adenylosuccinate synthetase family. As to quaternary structure, homodimer. Mg(2+) is required as a cofactor.

Its subcellular location is the cytoplasm. The catalysed reaction is IMP + L-aspartate + GTP = N(6)-(1,2-dicarboxyethyl)-AMP + GDP + phosphate + 2 H(+). The protein operates within purine metabolism; AMP biosynthesis via de novo pathway; AMP from IMP: step 1/2. Its function is as follows. Plays an important role in the de novo pathway of purine nucleotide biosynthesis. Catalyzes the first committed step in the biosynthesis of AMP from IMP. The protein is Adenylosuccinate synthetase of Paracoccus denitrificans (strain Pd 1222).